Here is a 906-residue protein sequence, read N- to C-terminus: Formin-like protein 16 (906 aa).

The first 28 residues, 1 to 28 (MAPAPSPTPLPLFLLLLLLVGVAPLAAA), serve as a signal peptide directing secretion. A disordered region spans residues 34 to 76 (QTRFPSTRTPAFATPPPITSPSPSPGTPTATPSSSPPSSSGKR). The segment covering 46–59 (ATPPPITSPSPSPG) has biased composition (pro residues). Over residues 60–73 (TPTATPSSSPPSSS) the composition is skewed to low complexity. The chain crosses the membrane as a helical span at residues 81–101 (VAVVSTALSSFAVSGLAFFLF). 6 disordered regions span residues 113–149 (AGGA…VDEN), 161–223 (KEGD…SLDS), 250–404 (AYAR…DQQA), 451–474 (RKTK…GRSN), 677–702 (GSLA…REER), and 834–906 (LQQQ…SDEE). Residues 114–128 (GGAGQHYGGAQGGAL) show a composition bias toward gly residues. Pro residues predominate over residues 174–185 (SRRPPQPPPPRP). The span at 186 to 196 (YRAERRQDAHE) shows a compositional bias: basic and acidic residues. Positions 270-294 (SPSPAPAPAARPASPSPSLPLPPGR) are enriched in pro residues. Residues 295–310 (ESPSRPQSIAAAAVAS) are compositionally biased toward low complexity. Over residues 311-383 (PAPPPPPPPK…KGGPPPPPPK (73 aa)) the composition is skewed to pro residues. In terms of domain architecture, FH2 spans 396–849 (PTGSADQQAK…PTPPPSSSQP (454 aa)). Composition is skewed to polar residues over residues 463 to 474 (GGSTSAGLGRSN) and 677 to 697 (GSLA…SQGP). The segment covering 847–866 (SQPAAPAATTKGAADDAPAP) has biased composition (low complexity).

The protein belongs to the formin-like family. Class-I subfamily.

It localises to the membrane. This chain is Formin-like protein 16 (FH16), found in Oryza sativa subsp. japonica (Rice).